Consider the following 499-residue polypeptide: Thioredoxin reductase 1, cytoplasmic (499 aa).

Residues Ser-22–Gly-23, Asp-42–Phe-43, Thr-58–Cys-59, and Gly-63–Lys-67 each bind FAD. Cysteines 59 and 64 form a disulfide. At Lys-68 the chain carries N6-succinyllysine. At Tyr-131 the chain carries Phosphotyrosine. FAD is bound by residues Tyr-131 to Gly-132 and Thr-161. NADP(+)-binding positions include Arg-166, Ala-198–Glu-204, Arg-221–Ser-222, Arg-226, Arg-226–Phe-228, Gly-292–Arg-293, and Lys-315. Position 200 (Tyr-200) interacts with FAD. FAD contacts are provided by residues Asp-334, Glu-341 to Thr-343, and His-472. NADP(+) is bound at residue Glu-341. The Proton acceptor role is filled by His-472. Residues Cys-497 to Sec-498 constitute a cross-link (cysteinyl-selenocysteine (Cys-Sec)). Sec-498 is a non-standard amino acid (selenocysteine).

It belongs to the class-I pyridine nucleotide-disulfide oxidoreductase family. Homodimer. It depends on FAD as a cofactor. In terms of processing, ISGylated.

Its subcellular location is the cytoplasm. It catalyses the reaction [thioredoxin]-dithiol + NADP(+) = [thioredoxin]-disulfide + NADPH + H(+). The catalysed reaction is H2O2 + NADPH + H(+) = NADP(+) + 2 H2O. Reduces disulfideprotein thioredoxin (Trx) to its dithiol-containing form. Homodimeric flavoprotein involved in the regulation of cellular redox reactions, growth and differentiation. Contains a selenocysteine residue at the C-terminal active site that is essential for catalysis. Also has reductase activity on hydrogen peroxide (H2O2). The protein is Thioredoxin reductase 1, cytoplasmic (TXNRD1) of Bos taurus (Bovine).